Reading from the N-terminus, the 100-residue chain is Large ribosomal subunit protein uL23 (100 aa).

It belongs to the universal ribosomal protein uL23 family. Part of the 50S ribosomal subunit. Contacts protein L29, and trigger factor when it is bound to the ribosome.

Its function is as follows. One of the early assembly proteins it binds 23S rRNA. One of the proteins that surrounds the polypeptide exit tunnel on the outside of the ribosome. Forms the main docking site for trigger factor binding to the ribosome. This is Large ribosomal subunit protein uL23 from Rippkaea orientalis (strain PCC 8801 / RF-1) (Cyanothece sp. (strain PCC 8801)).